A 770-amino-acid polypeptide reads, in one-letter code: 3-isopropylmalate dehydratase (770 aa).

Cysteine 354, cysteine 415, and cysteine 418 together coordinate [4Fe-4S] cluster.

Belongs to the aconitase/IPM isomerase family. Monomer. Requires [4Fe-4S] cluster as cofactor.

The catalysed reaction is (2R,3S)-3-isopropylmalate = (2S)-2-isopropylmalate. Its pathway is amino-acid biosynthesis; L-leucine biosynthesis; L-leucine from 3-methyl-2-oxobutanoate: step 2/4. Its function is as follows. Catalyzes the isomerization between 2-isopropylmalate and 3-isopropylmalate, via the formation of 2-isopropylmaleate. The protein is 3-isopropylmalate dehydratase (LEU1) of Candida maltosa (Yeast).